The chain runs to 1199 residues: DNA-directed RNA polymerase subunit beta' (1199 aa).

Positions 60, 62, 75, and 78 each coordinate Zn(2+). Mg(2+)-binding residues include Asp449, Asp451, and Asp453. Residues Cys818, Cys892, Cys899, and Cys902 each contribute to the Zn(2+) site.

It belongs to the RNA polymerase beta' chain family. In terms of assembly, the RNAP catalytic core consists of 2 alpha, 1 beta, 1 beta' and 1 omega subunit. When a sigma factor is associated with the core the holoenzyme is formed, which can initiate transcription. It depends on Mg(2+) as a cofactor. Requires Zn(2+) as cofactor.

It catalyses the reaction RNA(n) + a ribonucleoside 5'-triphosphate = RNA(n+1) + diphosphate. Its function is as follows. DNA-dependent RNA polymerase catalyzes the transcription of DNA into RNA using the four ribonucleoside triphosphates as substrates. This Geobacillus kaustophilus (strain HTA426) protein is DNA-directed RNA polymerase subunit beta'.